The chain runs to 72 residues: Translation initiation factor IF-1 (72 aa).

The S1-like domain occupies 1–72 (MAKEDVIEMQ…SKGRIVFRAR (72 aa)).

Belongs to the IF-1 family. As to quaternary structure, component of the 30S ribosomal translation pre-initiation complex which assembles on the 30S ribosome in the order IF-2 and IF-3, IF-1 and N-formylmethionyl-tRNA(fMet); mRNA recruitment can occur at any time during PIC assembly.

It is found in the cytoplasm. In terms of biological role, one of the essential components for the initiation of protein synthesis. Stabilizes the binding of IF-2 and IF-3 on the 30S subunit to which N-formylmethionyl-tRNA(fMet) subsequently binds. Helps modulate mRNA selection, yielding the 30S pre-initiation complex (PIC). Upon addition of the 50S ribosomal subunit IF-1, IF-2 and IF-3 are released leaving the mature 70S translation initiation complex. This chain is Translation initiation factor IF-1, found in Pseudoalteromonas translucida (strain TAC 125).